A 540-amino-acid chain; its full sequence is Chaperonin GroEL (540 aa).

Residues 29-32, 86-90, G413, 476-478, and D492 each bind ATP; these read TIGP, DGTTT, and NAA. The disordered stretch occupies residues 520-540; that stretch reads DKPEPESNNQMPATPGMGGMM.

This sequence belongs to the chaperonin (HSP60) family. In terms of assembly, forms a cylinder of 14 subunits composed of two heptameric rings stacked back-to-back. Interacts with the co-chaperonin GroES.

It localises to the cytoplasm. It catalyses the reaction ATP + H2O + a folded polypeptide = ADP + phosphate + an unfolded polypeptide.. Its function is as follows. Together with its co-chaperonin GroES, plays an essential role in assisting protein folding. The GroEL-GroES system forms a nano-cage that allows encapsulation of the non-native substrate proteins and provides a physical environment optimized to promote and accelerate protein folding. In Ligilactobacillus salivarius (strain UCC118) (Lactobacillus salivarius), this protein is Chaperonin GroEL.